A 311-amino-acid chain; its full sequence is 4-diphosphocytidyl-2-C-methyl-D-erythritol kinase (311 aa).

Lysine 16 is a catalytic residue. An ATP-binding site is contributed by 100–110 (PIGAGLAGGSS). The active site involves aspartate 142.

This sequence belongs to the GHMP kinase family. IspE subfamily.

It carries out the reaction 4-CDP-2-C-methyl-D-erythritol + ATP = 4-CDP-2-C-methyl-D-erythritol 2-phosphate + ADP + H(+). The protein operates within isoprenoid biosynthesis; isopentenyl diphosphate biosynthesis via DXP pathway; isopentenyl diphosphate from 1-deoxy-D-xylulose 5-phosphate: step 3/6. Its function is as follows. Catalyzes the phosphorylation of the position 2 hydroxy group of 4-diphosphocytidyl-2C-methyl-D-erythritol. The polypeptide is 4-diphosphocytidyl-2-C-methyl-D-erythritol kinase (Prochlorococcus marinus (strain MIT 9312)).